A 786-amino-acid chain; its full sequence is Mitochondrial intermediate peptidase (786 aa).

Residues 1–29 constitute a mitochondrion transit peptide; sequence MSSILLRSYRHHAKVWTRPSSKSSFIRSL. H567 is a Zn(2+) binding site. The active site involves E568. Zn(2+)-binding residues include H571 and H574.

This sequence belongs to the peptidase M3 family. Zn(2+) is required as a cofactor.

It is found in the mitochondrion matrix. The enzyme catalyses Release of an N-terminal octapeptide as second stage of processing of some proteins imported into the mitochondrion.. Its function is as follows. Cleaves proteins, imported into the mitochondrion, to their mature size. While most mitochondrial precursor proteins are processed to the mature form in one step by mitochondrial processing peptidase (MPP), the sequential cleavage by MIP of an octapeptide after initial processing by MPP is a required step for a subgroup of nuclear-encoded precursor proteins destined for the matrix or the inner membrane. The chain is Mitochondrial intermediate peptidase (OCT1) from Meyerozyma guilliermondii (strain ATCC 6260 / CBS 566 / DSM 6381 / JCM 1539 / NBRC 10279 / NRRL Y-324) (Yeast).